Here is a 170-residue protein sequence, read N- to C-terminus: Adenine phosphoribosyltransferase (170 aa).

The protein belongs to the purine/pyrimidine phosphoribosyltransferase family. Homodimer.

It is found in the cytoplasm. It carries out the reaction AMP + diphosphate = 5-phospho-alpha-D-ribose 1-diphosphate + adenine. It participates in purine metabolism; AMP biosynthesis via salvage pathway; AMP from adenine: step 1/1. Catalyzes a salvage reaction resulting in the formation of AMP, that is energically less costly than de novo synthesis. This Mycoplasma capricolum subsp. capricolum (strain California kid / ATCC 27343 / NCTC 10154) protein is Adenine phosphoribosyltransferase.